The following is a 742-amino-acid chain: uncharacterized protein (742 aa).

The tract at residues 167 to 471 (GIVPPEPWGH…AAGAAGGGGA (305 aa)) is disordered. Residues 205 to 218 (PAPPPSLFAPPPPS) are compositionally biased toward pro residues. Polar residues-rich tracts occupy residues 318–331 (SPATSNEISSNAVS) and 358–368 (GSPQTLSTAPS). Residues 386 to 401 (TAGPAAPPTTGGPPAP) show a composition bias toward pro residues. The segment covering 421–432 (PLSGGVPGGAVP) has biased composition (low complexity). Residues 433 to 447 (LGPPPTPPPAAPVTT) show a composition bias toward pro residues. The span at 448-464 (PPLASGAPVAPTGAAAG) shows a compositional bias: low complexity.

In terms of biological role, may be involved in the ESX-1 / type VII specialized secretion system (T7SS), which exports several proteins including EsxA and EsxB. Involved in DNA conjugation in the recipient strain. This is an uncharacterized protein from Mycolicibacterium smegmatis (strain MKD8) (Mycobacterium smegmatis).